The chain runs to 185 residues: MKMIVGLGNPGSKYAKTKHNIGFMVIDQLCEKYNVTLNKHDFEAEYGSFKYEGETVLLVKPLTFMNDSGRSVGPLMSYYQVGIDELLVIQDDMDLTMGKLRLRQKGSAGGHNGIKSIIAHTKSQTFKRLKIGIQHPQKSTVVNWVLTPFDKDGAPVINQAIDQACEAIDDWCQNDDFMKTMNKFN.

Tyr14 contributes to the tRNA binding site. His19 acts as the Proton acceptor in catalysis. TRNA contacts are provided by Phe64, Asn66, and Asn112.

The protein belongs to the PTH family. As to quaternary structure, monomer.

It is found in the cytoplasm. It carries out the reaction an N-acyl-L-alpha-aminoacyl-tRNA + H2O = an N-acyl-L-amino acid + a tRNA + H(+). Hydrolyzes ribosome-free peptidyl-tRNAs (with 1 or more amino acids incorporated), which drop off the ribosome during protein synthesis, or as a result of ribosome stalling. In terms of biological role, catalyzes the release of premature peptidyl moieties from peptidyl-tRNA molecules trapped in stalled 50S ribosomal subunits, and thus maintains levels of free tRNAs and 50S ribosomes. The chain is Peptidyl-tRNA hydrolase from Latilactobacillus sakei subsp. sakei (strain 23K) (Lactobacillus sakei subsp. sakei).